Consider the following 179-residue polypeptide: Large ribosomal subunit protein uL16m (179 aa).

The protein belongs to the universal ribosomal protein uL16 family. Component of the mitochondrial ribosome large subunit.

Its subcellular location is the mitochondrion. The protein is Large ribosomal subunit protein uL16m (RPL16) of Arabidopsis thaliana (Mouse-ear cress).